A 90-amino-acid polypeptide reads, in one-letter code: Small ribosomal subunit protein uS15 (90 aa).

The protein belongs to the universal ribosomal protein uS15 family. In terms of assembly, part of the 30S ribosomal subunit. Forms a bridge to the 50S subunit in the 70S ribosome, contacting the 23S rRNA.

One of the primary rRNA binding proteins, it binds directly to 16S rRNA where it helps nucleate assembly of the platform of the 30S subunit by binding and bridging several RNA helices of the 16S rRNA. Functionally, forms an intersubunit bridge (bridge B4) with the 23S rRNA of the 50S subunit in the ribosome. This Campylobacter curvus (strain 525.92) protein is Small ribosomal subunit protein uS15.